A 119-amino-acid chain; its full sequence is NADH dehydrogenase [ubiquinone] 1 subunit C2 (119 aa).

A helical transmembrane segment spans residues 56-75 (GLHRQLLYITAFFFAGYYLV).

The protein belongs to the complex I NDUFC2 subunit family. In terms of assembly, complex I is composed of 45 different subunits. Interacts with TMEM242.

Its subcellular location is the mitochondrion inner membrane. In terms of biological role, accessory subunit of the mitochondrial membrane respiratory chain NADH dehydrogenase (Complex I), that is believed not to be involved in catalysis but required for the complex assembly. Complex I functions in the transfer of electrons from NADH to the respiratory chain. The immediate electron acceptor for the enzyme is believed to be ubiquinone. The protein is NADH dehydrogenase [ubiquinone] 1 subunit C2 of Pongo pygmaeus (Bornean orangutan).